Consider the following 213-residue polypeptide: Transcription antitermination protein NusB (213 aa).

This sequence belongs to the NusB family.

Functionally, involved in transcription antitermination. Required for transcription of ribosomal RNA (rRNA) genes. Binds specifically to the boxA antiterminator sequence of the ribosomal RNA (rrn) operons. The protein is Transcription antitermination protein NusB of Synechococcus elongatus (strain ATCC 33912 / PCC 7942 / FACHB-805) (Anacystis nidulans R2).